A 119-amino-acid polypeptide reads, in one-letter code: uncharacterized protein (119 aa).

This is an uncharacterized protein from Homo sapiens (Human).